The chain runs to 254 residues: Long form salivary protein D7LC (254 aa).

A signal peptide spans 1–19 (MNAVITSLLFLSLVGLGYS). Disulfide bonds link cysteine 36–cysteine 66 and cysteine 62–cysteine 112. Tryptophan 49 serves as a coordination point for thromboxane A2. A leukotriene C4-binding site is contributed by tryptophan 52. Residue tyrosine 63 participates in thromboxane A2 binding. Leukotriene C4 is bound by residues glycine 136 and lysine 154. Thromboxane A2 is bound at residue lysine 154. Cystine bridges form between cysteine 162–cysteine 178, cysteine 174–cysteine 221, and cysteine 211–cysteine 230.

It belongs to the PBP/GOBP family.

The protein localises to the secreted. In terms of biological role, modulates blood feeding of female sandflies on vertebrate species by binding and sequestering different mediators involved in the host response. Binds leukotriene C4, leukotriene D4, leukotriene E4 and U-46619, a stable analog of thromboxane A2. Does not bind histamine or serotonin. Inhibits platelet aggregation induced by low concentrations of collagen in thromboxane A2-dependent manner. The polypeptide is Long form salivary protein D7LC (Phlebotomus papatasi (Sandfly)).